We begin with the raw amino-acid sequence, 135 residues long: Nucleoside diphosphate kinase (135 aa).

Residues K10, F58, R86, T92, R103, and N113 each contribute to the ATP site. The active-site Pros-phosphohistidine intermediate is the H116.

This sequence belongs to the NDK family. As to quaternary structure, homotetramer. It depends on Mg(2+) as a cofactor.

The protein resides in the cytoplasm. It catalyses the reaction a 2'-deoxyribonucleoside 5'-diphosphate + ATP = a 2'-deoxyribonucleoside 5'-triphosphate + ADP. It carries out the reaction a ribonucleoside 5'-diphosphate + ATP = a ribonucleoside 5'-triphosphate + ADP. In terms of biological role, major role in the synthesis of nucleoside triphosphates other than ATP. The ATP gamma phosphate is transferred to the NDP beta phosphate via a ping-pong mechanism, using a phosphorylated active-site intermediate. The sequence is that of Nucleoside diphosphate kinase from Nocardioides sp. (strain ATCC BAA-499 / JS614).